We begin with the raw amino-acid sequence, 344 residues long: Dihydroorotase (344 aa).

Zn(2+) is bound by residues histidine 13 and histidine 15. Residues 15-17 and asparagine 41 each bind substrate; that span reads HLR. Zn(2+)-binding residues include lysine 99, histidine 136, and histidine 174. At lysine 99 the chain carries N6-carboxylysine. Substrate is bound at residue histidine 136. Leucine 219 provides a ligand contact to substrate. A Zn(2+)-binding site is contributed by aspartate 247. Residue aspartate 247 is part of the active site. Positions 251 and 263 each coordinate substrate.

This sequence belongs to the metallo-dependent hydrolases superfamily. DHOase family. Class II DHOase subfamily. As to quaternary structure, homodimer. The cofactor is Zn(2+).

It carries out the reaction (S)-dihydroorotate + H2O = N-carbamoyl-L-aspartate + H(+). The protein operates within pyrimidine metabolism; UMP biosynthesis via de novo pathway; (S)-dihydroorotate from bicarbonate: step 3/3. Its function is as follows. Catalyzes the reversible cyclization of carbamoyl aspartate to dihydroorotate. This Acinetobacter baumannii (strain SDF) protein is Dihydroorotase.